The primary structure comprises 347 residues: Haptoglobin (347 aa).

Positions 1 to 18 (MSALGAVIALLLWGQLFA) are cleaved as a signal peptide. One can recognise a Sushi domain in the interval 31–88 (DGCPKPPEIANGYVEHLVRYQCKKYYRLRTEGDGVYTLNNEKQWTNKAVGDKLPECEA). 4 disulfides stabilise this stretch: cysteine 52–cysteine 86, cysteine 90–cysteine 207, cysteine 250–cysteine 281, and cysteine 292–cysteine 322. The Peptidase S1 domain maps to 103–345 (ILGGHLDAKG…IQDWVQKTIA (243 aa)). Asparagine 125, asparagine 148, asparagine 152, and asparagine 182 each carry an N-linked (GlcNAc...) asparagine glycan. Positions 259–264 (VPEKKT) are interaction with CD163.

This sequence belongs to the peptidase S1 family. Tetramer of two alpha and two beta chains; disulfide-linked. The hemoglobin/haptoglobin complex is composed of a haptoglobin dimer bound to two hemoglobin alpha-beta dimers. Interacts with CD163. Interacts with ERGIC3. Expressed by the liver and secreted in plasma.

The protein resides in the secreted. Its function is as follows. As a result of hemolysis, hemoglobin is found to accumulate in the kidney and is secreted in the urine. Haptoglobin captures, and combines with free plasma hemoglobin to allow hepatic recycling of heme iron and to prevent kidney damage. Haptoglobin also acts as an antioxidant, has antibacterial activity and plays a role in modulating many aspects of the acute phase response. Hemoglobin/haptoglobin complexes are rapidly cleared by the macrophage CD163 scavenger receptor expressed on the surface of liver Kupfer cells through an endocytic lysosomal degradation pathway. This chain is Haptoglobin (HP), found in Ateles geoffroyi (Black-handed spider monkey).